The sequence spans 1170 residues: Anion exchange protein 3 (1170 aa).

At 1–656 (MGRSYNEKDF…DLKDALDTQC (656 aa)) the chain is on the cytoplasmic side. 3 disordered regions span residues 17–96 (FHHT…PQLS), 112–167 (FHME…TTRG), and 239–267 (HLVKKSSRCQLPRSSNGSPPLSSLKRRKR). The span at 32–53 (RFRKRVLSMDRRRKRKRKKKKT) shows a compositional bias: basic residues. Residues 67–76 (VDEEEAESEI) show a composition bias toward acidic residues. Over residues 246-259 (RCQLPRSSNGSPPL) the composition is skewed to polar residues. The next 5 helical transmembrane spans lie at 657-677 (IAAVIFIYFAALSPTITFGGL), 702-722 (FSLLAGQPLLIIGFSGPLLVF), 744-764 (IGFWLIFIVLVIVAAEGSFLV), 774-794 (IFAFLISLIFIYETFSKLIKV), and 828-848 (PNTALLSMVLMMGTFFTAFFL). Positions 657–1170 (IAAVIFIYFA…DEYNEIHMLV (514 aa)) are membrane (anion exchange). Residues 849-863 (RKLRNSRFLGGKVRR) lie on the Cytoplasmic side of the membrane. A run of 5 helical transmembrane segments spans residues 864 to 884 (VIGDFGIPISILISVLVDILI), 919 to 939 (FPVWMMGASVIPALLVFILIF), 966 to 986 (LLLIVTLGAICPLFGLPWLTA), 1020 to 1063 (RVTG…LTGI), and 1104 to 1124 (IVLLWVVKSTVASLAFPFILI).

This sequence belongs to the anion exchanger (TC 2.A.31) family. In terms of tissue distribution, widely expressed at low levels.

The protein localises to the cell membrane. It carries out the reaction hydrogencarbonate(in) + chloride(out) = hydrogencarbonate(out) + chloride(in). Sodium-independent anion exchanger which mediates the electroneutral exchange of chloride for bicarbonate ions across the cell membrane. May be involved in the regulation of intracellular pH, and the modulation of cardiac action potential. This Danio rerio (Zebrafish) protein is Anion exchange protein 3.